The chain runs to 85 residues: Large ribosomal subunit protein bL27 (85 aa).

A disordered region spans residues Met1 to Arg20.

This sequence belongs to the bacterial ribosomal protein bL27 family.

The protein is Large ribosomal subunit protein bL27 of Histophilus somni (strain 129Pt) (Haemophilus somnus).